The chain runs to 251 residues: MFQQNKHHQQQQQQQQQQGVVQSGVASATVNNPSESIVAGNIYECSLHGILSTPSSTFIQRAKGMMRCEHPVSYKEMVFKSTVQSAGPSWAEGSILPSEIHVRYEKNTVYVRYVGVPQIKDNINAMIRNVVDIKSSETFFIYLENLGYVKDYEYFVDGYQYSTYNLSLFLVNHRRVLNDGTKGELLNKHSMVELQCLSGEEGFVAAAEYLNTYAEYLYPFVELIKFDHRLLTAENSNTPTTNVNVVGGYNR.

It belongs to the Mediator complex subunit 18 family. As to quaternary structure, component of the Mediator complex.

The protein localises to the nucleus. Its function is as follows. Component of the Mediator complex, a coactivator involved in the regulated transcription of nearly all RNA polymerase II-dependent genes. Mediator functions as a bridge to convey information from gene-specific regulatory proteins to the basal RNA polymerase II transcription machinery. Mediator is recruited to promoters by direct interactions with regulatory proteins and serves as a scaffold for the assembly of a functional preinitiation complex with RNA polymerase II and the general transcription factors. The protein is Putative mediator of RNA polymerase II transcription subunit 18 (med18) of Dictyostelium discoideum (Social amoeba).